A 474-amino-acid polypeptide reads, in one-letter code: Dihydrolipoyl dehydrogenase (474 aa).

FAD contacts are provided by residues 34–51 (EGNPYDDPKGEARLGGTC), K60, and G124. Residues C51 and C56 are joined by a disulfide bond. NAD(+) contacts are provided by residues 189–193 (GAGVI), E212, V246, and 278–281 (SVGR). Residues D321 and A329 each coordinate FAD. H453 serves as the catalytic Proton acceptor.

This sequence belongs to the class-I pyridine nucleotide-disulfide oxidoreductase family. The cofactor is FAD.

The protein resides in the cytoplasm. The catalysed reaction is N(6)-[(R)-dihydrolipoyl]-L-lysyl-[protein] + NAD(+) = N(6)-[(R)-lipoyl]-L-lysyl-[protein] + NADH + H(+). In terms of biological role, the branched-chain alpha-keto dehydrogenase complex catalyzes the overall conversion of alpha-keto acids to acyl-CoA and CO(2). It contains multiple copies of 3 enzymatic components: branched-chain alpha-keto acid decarboxylase (E1), lipoamide acyltransferase (E2) and lipoamide dehydrogenase (E3). The polypeptide is Dihydrolipoyl dehydrogenase (odhL) (Cupriavidus necator (strain ATCC 17699 / DSM 428 / KCTC 22496 / NCIMB 10442 / H16 / Stanier 337) (Ralstonia eutropha)).